Reading from the N-terminus, the 212-residue chain is Small ribosomal subunit protein uS5 (212 aa).

One can recognise an S5 DRBM domain in the interval 48–111 (LEDEVLDINM…DIAKLNIIDV (64 aa)).

The protein belongs to the universal ribosomal protein uS5 family. Part of the 30S ribosomal subunit. Contacts protein S4.

In terms of biological role, with S4 and S12 plays an important role in translational accuracy. The chain is Small ribosomal subunit protein uS5 from Haloarcula marismortui (strain ATCC 43049 / DSM 3752 / JCM 8966 / VKM B-1809) (Halobacterium marismortui).